Reading from the N-terminus, the 264-residue chain is Teichoic acids export ATP-binding protein TagH (264 aa).

The region spanning 24–243 (IKDALIPKNK…YEQFLKDFKK (220 aa)) is the ABC transporter domain. An ATP-binding site is contributed by 57–64 (GINGSGKS).

This sequence belongs to the ABC transporter superfamily. Teichoic acids exporter (TC 3.A.1.104.1) family. The complex is composed of two ATP-binding proteins (TagH) and two transmembrane proteins (TagG).

It is found in the cell membrane. The enzyme catalyses ATP + H2O + teichoic acidSide 1 = ADP + phosphate + teichoic acidSide 2.. Part of the ABC transporter complex TagGH involved in teichoic acids export. Responsible for energy coupling to the transport system. The sequence is that of Teichoic acids export ATP-binding protein TagH from Staphylococcus haemolyticus (strain JCSC1435).